Here is a 1863-residue protein sequence, read N- to C-terminus: Breast cancer type 1 susceptibility protein homolog (1863 aa).

Met1 carries the N-acetylmethionine modification. The segment at 24 to 65 (CPICLELIKEPVSTKCDHIFCKFCMLKLLNQKKGPSQCPLCK) adopts an RING-type zinc-finger fold. A Glycyl lysine isopeptide (Lys-Gly) (interchain with G-Cter in SUMO2) cross-link involves residue Lys109. Position 114 is a phosphoserine (Ser114). The segment at 230 to 267 (ETDVTNTEHHQPSNNDLNTTEKRATERHPEKYQGSSVS) is disordered. The segment covering 248-260 (TTEKRATERHPEK) has biased composition (basic and acidic residues). Lys301 participates in a covalent cross-link: Glycyl lysine isopeptide (Lys-Gly) (interchain with G-Cter in SUMO2). A disordered region spans residues 306–338 (NKSKQPGLARSQHNRWAGSKETCNDRRTPSTEK). A compositionally biased stretch (basic and acidic residues) spans 327 to 338 (TCNDRRTPSTEK). Residue Lys339 forms a Glycyl lysine isopeptide (Lys-Gly) (interchain with G-Cter in SUMO2) linkage. Residues Ser395, Ser398, Ser423, and Ser434 each carry the phosphoserine modification. Glycyl lysine isopeptide (Lys-Gly) (interchain with G-Cter in SUMO2) cross-links involve residues Lys443, Lys459, and Lys519. A Phosphoserine modification is found at Ser551. Residues Lys583 and Lys654 each participate in a glycyl lysine isopeptide (Lys-Gly) (interchain with G-Cter in SUMO2) cross-link. The interval 650–739 (IKKKKYNQMP…EKEEKLETVK (90 aa)) is disordered. Phosphoserine is present on residues Ser694, Ser708, and Ser725. A compositionally biased stretch (polar residues) spans 705–716 (APGSFTNCSNTS). The segment covering 727 to 737 (PREEKEEKLET) has biased composition (basic and acidic residues). Residues Lys734 and Lys739 each participate in a glycyl lysine isopeptide (Lys-Gly) (interchain with G-Cter in SUMO2) cross-link. 2 positions are modified to phosphoserine: Ser753 and Ser840. Positions 896-915 (SPKVTFEREQKEQNQGKNES) are disordered. Basic and acidic residues predominate over residues 900 to 909 (TFEREQKEQN). Residues Lys918 and Lys987 each participate in a glycyl lysine isopeptide (Lys-Gly) (interchain with G-Cter in SUMO2) cross-link. Position 988 is a phosphoserine; by CHEK2 (Ser988). Ser1009 carries the post-translational modification Phosphoserine. Residue Lys1079 forms a Glycyl lysine isopeptide (Lys-Gly) (interchain with G-Cter in SUMO2) linkage. 11 positions are modified to phosphoserine: Ser1143, Ser1189, Ser1191, Ser1211, Ser1217, Ser1218, Ser1280, Ser1328, Ser1336, Ser1342, and Ser1387. Residues 1181–1216 (VQRGELSRSPSPFTHTHLAQGYRRGAKKLESSEENL) are disordered. The segment at 1322–1395 (KQMRHQSESQ…SSQSDILTTQ (74 aa)) is disordered. Over residues 1373–1395 (ESETSVSEDCSGLSSQSDILTTQ) the composition is skewed to polar residues. Thr1394 is modified (phosphothreonine). The interval 1397–1424 (RDTMQDNLIKLQQEMAELEAVLEQHGSQ) is interaction with PALB2. Phosphoserine is present on residues Ser1423, Ser1457, Ser1524, and Ser1542. The segment at 1440 to 1505 (EDLQNPEQST…SSPSKCPSLD (66 aa)) is disordered. Residues 1444–1470 (NPEQSTSEKAVLTSQKSSEYPISQNPE) show a composition bias toward polar residues. The disordered stretch occupies residues 1565-1642 (ESGISLFSDD…SREKPELTAS (78 aa)). Polar residues predominate over residues 1610–1624 (SAQSPAAAHTTNTAG). BRCT domains are found at residues 1642-1736 (STER…DFEV) and 1756-1855 (QDRK…TYLI).

In terms of assembly, heterodimer with BARD1. Part of the BRCA1-associated genome surveillance complex (BASC), which contains BRCA1, MSH2, MSH6, MLH1, ATM, BLM, PMS2 and the MRE11-RAD50-NBN protein (MRN) complex. This association could be a dynamic process changing throughout the cell cycle and within subnuclear domains. Component of the BRCA1-A complex, at least composed of BRCA1, BARD1, UIMC1/RAP80, ABRAXAS1, BRCC3/BRCC36, BABAM2 and BABAM1/NBA1. Interacts (via the BRCT domains) with ABRAXAS1 (phosphorylated form); this is important for recruitment to sites of DNA damage. Can form a heterotetramer with two molecules of ABRAXAS1 (phosphorylated form). Component of the BRCA1-RBBP8 complex. Interacts (via the BRCT domains) with RBBP8 ('Ser-327' phosphorylated form); the interaction ubiquitinates RBBP8, regulates CHEK1 activation, and involves RBBP8 in BRCA1-dependent G2/M checkpoint control on DNA damage. Associates with RNA polymerase II holoenzyme. Interacts with SMC1A, NELFB, DCLRE1C, CLSPN. CHEK1, CHEK2, BAP1, BRCC3, UBXN1 and PCLAF. Interacts (via BRCT domains) with BRIP1 (phosphorylated form). Interacts with FANCD2 (ubiquitinated form). Interacts with H2AX (phosphorylated on 'Ser-140'). Interacts (via the BRCT domains) with ACACA (phosphorylated form); the interaction prevents dephosphorylation of ACACA. Part of a BRCA complex containing BRCA1, BRCA2 and PALB2. Interacts directly with PALB2; the interaction is essential for its function in HRR. Interacts directly with BRCA2; the interaction occurs only in the presence of PALB2 which serves as the bridging protein. Interacts (via the BRCT domains) with LMO4; the interaction represses the transcriptional activity of BRCA1. Interacts (via the BRCT domains) with CCAR2 (via N-terminus); the interaction represses the transcriptional activator activity of BRCA1. Interacts with EXD2. Interacts (via C-terminus) with DHX9; this interaction is direct and links BRCA1 to the RNA polymerase II holoenzyme. Interacts with DNA helicase ZGRF1; the interaction is increased following DNA damage induction. Phosphorylated in response to IR, UV, and various stimuli that cause checkpoint activation, probably by ATM or ATR. Phosphorylation at Ser-988 by CHEK2 regulates mitotic spindle assembly. Phosphorylation by AURKA regulates centrosomal microtubule nucleation. In terms of processing, autoubiquitinated, undergoes 'Lys-6'-linked polyubiquitination. 'Lys-6'-linked polyubiquitination does not promote degradation.

Its subcellular location is the nucleus. The protein localises to the chromosome. It localises to the cytoplasm. The catalysed reaction is S-ubiquitinyl-[E2 ubiquitin-conjugating enzyme]-L-cysteine + [acceptor protein]-L-lysine = [E2 ubiquitin-conjugating enzyme]-L-cysteine + N(6)-ubiquitinyl-[acceptor protein]-L-lysine.. E3 ubiquitin-protein ligase that specifically mediates the formation of 'Lys-6'-linked polyubiquitin chains and plays a central role in DNA repair by facilitating cellular responses to DNA damage. It is unclear whether it also mediates the formation of other types of polyubiquitin chains. The BRCA1-BARD1 heterodimer coordinates a diverse range of cellular pathways such as DNA damage repair, ubiquitination and transcriptional regulation to maintain genomic stability. Regulates centrosomal microtubule nucleation. Required for appropriate cell cycle arrests after ionizing irradiation in both the S-phase and the G2 phase of the cell cycle. Required for FANCD2 targeting to sites of DNA damage. Inhibits lipid synthesis by binding to inactive phosphorylated ACACA and preventing its dephosphorylation. Contributes to homologous recombination repair (HRR) via its direct interaction with PALB2, fine-tunes recombinational repair partly through its modulatory role in the PALB2-dependent loading of BRCA2-RAD51 repair machinery at DNA breaks. Component of the BRCA1-RBBP8 complex which regulates CHEK1 activation and controls cell cycle G2/M checkpoints on DNA damage via BRCA1-mediated ubiquitination of RBBP8. Acts as a transcriptional activator. The polypeptide is Breast cancer type 1 susceptibility protein homolog (BRCA1) (Pan troglodytes (Chimpanzee)).